Reading from the N-terminus, the 231-residue chain is Protein fmp52-2, mitochondrial (231 aa).

The N-terminal 46 residues, 1 to 46, are a transit peptide targeting the mitochondrion; it reads MTMTTAAVFGCTGAVGSQILATLLAIDTFPSVKTISRRLPNVQSPK.

It belongs to the FMP52 family.

The protein resides in the mitochondrion outer membrane. The chain is Protein fmp52-2, mitochondrial (fmp522) from Neosartorya fischeri (strain ATCC 1020 / DSM 3700 / CBS 544.65 / FGSC A1164 / JCM 1740 / NRRL 181 / WB 181) (Aspergillus fischerianus).